Consider the following 306-residue polypeptide: UDP-3-O-acyl-N-acetylglucosamine deacetylase (306 aa).

Zn(2+)-binding residues include His-79, His-238, and Asp-242. The active-site Proton donor is His-265.

This sequence belongs to the LpxC family. The cofactor is Zn(2+).

The catalysed reaction is a UDP-3-O-[(3R)-3-hydroxyacyl]-N-acetyl-alpha-D-glucosamine + H2O = a UDP-3-O-[(3R)-3-hydroxyacyl]-alpha-D-glucosamine + acetate. The protein operates within glycolipid biosynthesis; lipid IV(A) biosynthesis; lipid IV(A) from (3R)-3-hydroxytetradecanoyl-[acyl-carrier-protein] and UDP-N-acetyl-alpha-D-glucosamine: step 2/6. Functionally, catalyzes the hydrolysis of UDP-3-O-myristoyl-N-acetylglucosamine to form UDP-3-O-myristoylglucosamine and acetate, the committed step in lipid A biosynthesis. The protein is UDP-3-O-acyl-N-acetylglucosamine deacetylase of Shewanella sediminis (strain HAW-EB3).